A 130-amino-acid polypeptide reads, in one-letter code: Small ribosomal subunit protein uS9 (130 aa).

The protein belongs to the universal ribosomal protein uS9 family.

In Burkholderia mallei (strain NCTC 10247), this protein is Small ribosomal subunit protein uS9.